We begin with the raw amino-acid sequence, 262 residues long: MTQHFLLFDIGNTNVKIGIAVETAVLTSYVLPTDPGQTTDSIGLRLLEVLRHAGLGPADVGACVASSVVPGVNPLIRRACERYLYRKLLFAPGDIAIPLDNRYERPAEVGADRLVAAYAARRLYPGPRSLVSVDFGTATTFDCVEGGAYLGGLICPGVLSSAGALSSRTAKLPRISLEVEEDSPVIGRSTTTSLNHGFIFGFAAMTEGVLARLNGVLPGPTEVVATGGFARDIARVSSCFDHVRPDLLLQGLRLLYLERDAR.

9–16 (DIGNTNVK) is an ATP binding site. Substrate-binding positions include Tyr-103 and 110–113 (GADR). Asp-112 acts as the Proton acceptor in catalysis. Asp-134 provides a ligand contact to K(+). Thr-137 contributes to the ATP binding site. A substrate-binding site is contributed by Thr-190.

This sequence belongs to the type III pantothenate kinase family. In terms of assembly, homodimer. It depends on NH4(+) as a cofactor. K(+) is required as a cofactor.

It is found in the cytoplasm. It catalyses the reaction (R)-pantothenate + ATP = (R)-4'-phosphopantothenate + ADP + H(+). It functions in the pathway cofactor biosynthesis; coenzyme A biosynthesis; CoA from (R)-pantothenate: step 1/5. In terms of biological role, catalyzes the phosphorylation of pantothenate (Pan), the first step in CoA biosynthesis. The protein is Type III pantothenate kinase of Nitratidesulfovibrio vulgaris (strain DSM 19637 / Miyazaki F) (Desulfovibrio vulgaris).